The sequence spans 420 residues: Glutaryl-CoA dehydrogenase, mitochondrial (420 aa).

125 to 126 (RS) serves as a coordination point for substrate. FAD is bound by residues 164-167 (FGLT), Ser173, and 198-200 (WIT). Ser173 provides a ligand contact to substrate. Substrate contacts are provided by residues 273 to 277 (FSCLN) and Arg280. Glu400 (proton acceptor) is an active-site residue. FAD-binding residues include Thr402 and Phe420.

The protein belongs to the acyl-CoA dehydrogenase family. FAD serves as cofactor.

It is found in the mitochondrion matrix. It catalyses the reaction glutaryl-CoA + oxidized [electron-transfer flavoprotein] + 2 H(+) = (2E)-butenoyl-CoA + reduced [electron-transfer flavoprotein] + CO2. Its pathway is amino-acid metabolism; lysine degradation. It participates in amino-acid metabolism; tryptophan metabolism. This Dictyostelium discoideum (Social amoeba) protein is Glutaryl-CoA dehydrogenase, mitochondrial (gcdh).